A 630-amino-acid chain; its full sequence is 1-deoxy-D-xylulose-5-phosphate synthase (630 aa).

Thiamine diphosphate contacts are provided by residues His-72 and 113 to 115 (GHS). Asp-144 provides a ligand contact to Mg(2+). Residues 145–146 (GA), Asn-173, Tyr-284, and Glu-367 contribute to the thiamine diphosphate site. Residue Asn-173 coordinates Mg(2+).

It belongs to the transketolase family. DXPS subfamily. In terms of assembly, homodimer. Mg(2+) is required as a cofactor. Thiamine diphosphate serves as cofactor.

The enzyme catalyses D-glyceraldehyde 3-phosphate + pyruvate + H(+) = 1-deoxy-D-xylulose 5-phosphate + CO2. Its pathway is metabolic intermediate biosynthesis; 1-deoxy-D-xylulose 5-phosphate biosynthesis; 1-deoxy-D-xylulose 5-phosphate from D-glyceraldehyde 3-phosphate and pyruvate: step 1/1. Catalyzes the acyloin condensation reaction between C atoms 2 and 3 of pyruvate and glyceraldehyde 3-phosphate to yield 1-deoxy-D-xylulose-5-phosphate (DXP). The chain is 1-deoxy-D-xylulose-5-phosphate synthase from Geobacillus thermodenitrificans (strain NG80-2).